Reading from the N-terminus, the 776-residue chain is A-type ATP synthase subunit A (776 aa).

The protein belongs to the ATPase alpha/beta chains family. In terms of assembly, has multiple subunits with at least A(3), B(3), C, D, E, F, H, I and proteolipid K(x). In terms of processing, this protein undergoes a protein self splicing that involves a post-translational excision of the VDE intervening region (intein) followed by peptide ligation.

The protein resides in the cell membrane. The enzyme catalyses ATP + H2O + 4 H(+)(in) = ADP + phosphate + 5 H(+)(out). Its function is as follows. Component of the A-type ATP synthase that produces ATP from ADP in the presence of a proton gradient across the membrane. The A chain is the catalytic subunit. The protein is A-type ATP synthase subunit A of Thermoplasma volcanium (strain ATCC 51530 / DSM 4299 / JCM 9571 / NBRC 15438 / GSS1).